The primary structure comprises 1122 residues: Desmoglein-2 (1122 aa).

Residues 1 to 28 (MARSPGDRCALLLLVQLLAVVCLDFGNG) form the signal peptide. The propeptide occupies 29-54 (LHLEVFSPRNEGKPFPKHTHLVRQKR). 4 consecutive Cadherin domains span residues 55 to 164 (AWIT…EPVF), 165 to 277 (TQEV…IPVV), 278 to 398 (ENKM…SSVV), and 397 to 504 (VVSF…CPVL). At 55–618 (AWITAPVALR…YDNYVGLGPA (564 aa)) the chain is on the extracellular side. N117 carries an N-linked (GlcNAc...) asparagine glycan. N-linked (GlcNAc...) asparagine glycans are attached at residues N314, N467, and N519. Residues 619 to 639 (AIALMILALLLLLLVPLLLLI) traverse the membrane as a helical segment. The Cytoplasmic portion of the chain corresponds to 640–1122 (CHCGGGAKGF…KHSTMQHSYS (483 aa)). 4 positions are modified to phosphoserine: S685, S706, S709, and S729. T808 is subject to Phosphothreonine. A phosphoserine mark is found at S810, S814, and S819. Desmoglein repeat repeat units lie at residues 885-916 (AYSS…ESSV), 917-945 (SSRQ…SYAK), 946-971 (GSAV…ERVY), 972-995 (APTS…ERVI), 996-1024 (QPNG…ERES), and 1025-1055 (ILAP…ERIL). The tract at residues 913–932 (ESSVSSRQSQKVVPPPDPVA) is disordered. Residues 914–924 (SSVSSRQSQKV) are compositionally biased toward low complexity. Positions 1089-1122 (LPNLDLEESDRPNSTITTSSTRVTKHSTMQHSYS) are disordered. A compositionally biased stretch (polar residues) spans 1100–1122 (PNSTITTSSTRVTKHSTMQHSYS). Phosphoserine is present on S1122.

As to quaternary structure, interacts with PKP2. Interacts with CTNNB1; the interaction promotes localization of CTNNB1 at cell junctions thus reducing its nuclear localization and subsequent transcription of CTNNB1/TCF-target genes. In terms of processing, palmitoylated by ZDHHC5 at the plasma membrane. As to expression, expressed in undifferentiated pluripotent stem cells, expression decreases during differentiation (at protein level). Expressed by embryonic stem cells, expression is reduced during differentiation (at protein level). Expressed at the apical-lateral cell membrane of kidney tubular epithelial cells (at protein level). Expressed in epidermis and heart (at protein level). Expressed in the brain, spleen, lung, liver skeletal muscle, kidney and testis.

The protein resides in the cell membrane. Its subcellular location is the cell junction. It localises to the desmosome. It is found in the cytoplasm. A component of desmosome cell-cell junctions which are required for positive regulation of cellular adhesion. Involved in the interaction of plaque proteins and intermediate filaments mediating cell-cell adhesion. Required for proliferation and viability of embryonic stem cells in the blastocyst, thereby crucial for progression of post-implantation embryonic development. Maintains pluripotency by regulating epithelial to mesenchymal transition/mesenchymal to epithelial transition (EMT/MET) via interacting with and sequestering CTNNB1 to sites of cell-cell contact, thereby reducing translocation of CTNNB1 to the nucleus and subsequent transcription of CTNNB1/TCF-target genes. Promotes pluripotency and the multi-lineage differentiation potential of hematopoietic stem cells. Plays a role in endothelial cell sprouting and elongation via mediating the junctional-association of cortical actin fibers and CDH5. Plays a role in limiting inflammatory infiltration and the apoptotic response to injury in kidney tubular epithelial cells, potentially via its role in maintaining cell-cell adhesion and the epithelial barrier. This Mus musculus (Mouse) protein is Desmoglein-2 (Dsg2).